A 154-amino-acid chain; its full sequence is 17.7 kDa class I heat shock protein (154 aa).

Residues 40 to 154 form the sHSP domain; the sequence is ETSAFANTRI…PDVKSIEISG (115 aa).

The protein belongs to the small heat shock protein (HSP20) family. As to quaternary structure, forms oligomeric structures.

The protein resides in the cytoplasm. This is 17.7 kDa class I heat shock protein from Solanum peruvianum (Peruvian tomato).